A 1024-amino-acid chain; its full sequence is Protein translocase subunit SecA (1024 aa).

Residues glutamine 143, 161–165 (GEGKT), and aspartate 661 contribute to the ATP site. Positions 970 to 1024 (HEEAGSVYNAQPDGEPESQASKQQPVVADHSKPGRNDLCPCGSGKKYKNCHGREA) are disordered. Residues cysteine 1008, cysteine 1010, cysteine 1019, and histidine 1020 each contribute to the Zn(2+) site. Positions 1014–1024 (KKYKNCHGREA) are enriched in basic residues.

The protein belongs to the SecA family. In terms of assembly, monomer and homodimer. Part of the essential Sec protein translocation apparatus which comprises SecA, SecYEG and auxiliary proteins SecDF. Other proteins may also be involved. Zn(2+) is required as a cofactor.

The protein resides in the cell inner membrane. It localises to the cytoplasm. The enzyme catalyses ATP + H2O + cellular proteinSide 1 = ADP + phosphate + cellular proteinSide 2.. Functionally, part of the Sec protein translocase complex. Interacts with the SecYEG preprotein conducting channel. Has a central role in coupling the hydrolysis of ATP to the transfer of proteins into and across the cell membrane, serving as an ATP-driven molecular motor driving the stepwise translocation of polypeptide chains across the membrane. The chain is Protein translocase subunit SecA from Chlorobium luteolum (strain DSM 273 / BCRC 81028 / 2530) (Pelodictyon luteolum).